A 508-amino-acid chain; its full sequence is Maturase K (508 aa).

Belongs to the intron maturase 2 family. MatK subfamily.

It localises to the plastid. The protein localises to the chloroplast. Its function is as follows. Usually encoded in the trnK tRNA gene intron. Probably assists in splicing its own and other chloroplast group II introns. This Antirrhinum majus (Garden snapdragon) protein is Maturase K.